A 63-amino-acid polypeptide reads, in one-letter code: Large ribosomal subunit protein bL32 (63 aa).

Residues 1–45 form a disordered region; it reads MAVQQNKKSRSRRDMRRSHDALTKPTLSVDPTTGETHLRHHMTPD. The segment covering 7 to 16 has biased composition (basic residues); it reads KKSRSRRDMR. Residues 25-35 show a composition bias toward polar residues; the sequence is PTLSVDPTTGE.

Belongs to the bacterial ribosomal protein bL32 family.

In Legionella pneumophila (strain Paris), this protein is Large ribosomal subunit protein bL32.